The sequence spans 232 residues: MVELPANLIKATFLSRPNRFTVVAAREGEKLVAFLADPGRLTELLLPGAEVYLAPASRQGDRKTAYDVVLLRQNGTFISLDSRLPNRLFAAALQAGSLEPFKGYRLRATEVRAGSSRLDFLLQGDGHPPCYVEVKSVTLVRGGLALFPDAPTARGSRHLRELMALHSRGYRAAAVFIIQREDAISLAPNEVTDPCFSSTIREAAAAGVEIYAYRCHIDPVTVSLIAPVMVKL.

This sequence belongs to the SfsA family.

This is Sugar fermentation stimulation protein homolog from Moorella thermoacetica (strain ATCC 39073 / JCM 9320).